The sequence spans 430 residues: Serine--tRNA ligase (430 aa).

237 to 239 is a binding site for L-serine; the sequence is TAE. Position 268–270 (268–270) interacts with ATP; the sequence is RSE. Position 291 (Glu-291) interacts with L-serine. Position 355 to 358 (355 to 358) interacts with ATP; the sequence is EISS. Ser-391 contributes to the L-serine binding site.

It belongs to the class-II aminoacyl-tRNA synthetase family. Type-1 seryl-tRNA synthetase subfamily. As to quaternary structure, homodimer. The tRNA molecule binds across the dimer.

The protein localises to the cytoplasm. It catalyses the reaction tRNA(Ser) + L-serine + ATP = L-seryl-tRNA(Ser) + AMP + diphosphate + H(+). It carries out the reaction tRNA(Sec) + L-serine + ATP = L-seryl-tRNA(Sec) + AMP + diphosphate + H(+). It functions in the pathway aminoacyl-tRNA biosynthesis; selenocysteinyl-tRNA(Sec) biosynthesis; L-seryl-tRNA(Sec) from L-serine and tRNA(Sec): step 1/1. In terms of biological role, catalyzes the attachment of serine to tRNA(Ser). Is also able to aminoacylate tRNA(Sec) with serine, to form the misacylated tRNA L-seryl-tRNA(Sec), which will be further converted into selenocysteinyl-tRNA(Sec). The sequence is that of Serine--tRNA ligase from Klebsiella pneumoniae subsp. pneumoniae (strain ATCC 700721 / MGH 78578).